Here is a 422-residue protein sequence, read N- to C-terminus: MLKEEDKIFTNLHGQQSHDLKSSKKRGDWDNTKALLDKGREFIIEEVKKSGLRGRGGAGFSTGMKWSFMPKNSAKPCYLVVNADESEPGTCKDRDILRFEPHKLIEGCLLASFAIGANDCYIYIRGEFYNEASNIQRALDEAYKDGLIGKNACGSGFDCNIYLHRGAGAYICGEETALLESLEGKKGMPRLKPPFPAGFGLYGCPTTINNVESIAVVPTILRRGASWFASIGKPNNTGTKIFCISGHVNKPCNVEEAMGISLKELIEKYAGGVRGGWDNLKAIIPGGSSVPLLPKSLCEVDMDFDSLRTAGSGLGTGGIIVMDKSTDIIYAIARLSKFYMHESCGQCTPCREGTGWMWRVMMRLVKGNAQKSEIDELLNVTKEIEGHTICALGDAAAWPIQGLIRHFRSEIEERIKGWSSAI.

The tract at residues Met-1–Arg-26 is disordered. Positions Gln-16–Arg-26 are enriched in basic and acidic residues. Gly-54 to Gly-63 is a binding site for NAD(+). Gly-166 to Ser-213 serves as a coordination point for FMN. Residues Cys-344, Cys-347, Cys-350, and Cys-390 each coordinate [4Fe-4S] cluster.

Belongs to the complex I 51 kDa subunit family. FMN is required as a cofactor. It depends on [4Fe-4S] cluster as a cofactor.

The catalysed reaction is a quinone + NADH + 5 H(+)(in) = a quinol + NAD(+) + 4 H(+)(out). Functionally, NDH-1 shuttles electrons from NADH, via FMN and iron-sulfur (Fe-S) centers, to quinones in the respiratory chain. Couples the redox reaction to proton translocation (for every two electrons transferred, four hydrogen ions are translocated across the cytoplasmic membrane), and thus conserves the redox energy in a proton gradient. This is NADH-quinone oxidoreductase subunit F (nuoF) from Rickettsia felis (strain ATCC VR-1525 / URRWXCal2) (Rickettsia azadi).